Reading from the N-terminus, the 253-residue chain is Sulfate transporter CysZ (253 aa).

4 helical membrane passes run 31 to 51 (FVIL…WWLF), 75 to 95 (LLWP…FSTI), 151 to 171 (IVLL…PVLW), and 222 to 242 (IPLL…AMWV).

It belongs to the CysZ family.

Its subcellular location is the cell inner membrane. Functionally, high affinity, high specificity proton-dependent sulfate transporter, which mediates sulfate uptake. Provides the sulfur source for the cysteine synthesis pathway. The sequence is that of Sulfate transporter CysZ from Shigella dysenteriae serotype 1 (strain Sd197).